Consider the following 160-residue polypeptide: Protein-export protein SecB (160 aa).

It belongs to the SecB family. As to quaternary structure, homotetramer, a dimer of dimers. One homotetramer interacts with 1 SecA dimer.

The protein resides in the cytoplasm. Functionally, one of the proteins required for the normal export of preproteins out of the cell cytoplasm. It is a molecular chaperone that binds to a subset of precursor proteins, maintaining them in a translocation-competent state. It also specifically binds to its receptor SecA. The sequence is that of Protein-export protein SecB from Agrobacterium fabrum (strain C58 / ATCC 33970) (Agrobacterium tumefaciens (strain C58)).